The following is a 313-amino-acid chain: Protein FixB (313 aa).

255–283 (LYLAVGISGQIQHMVGANGAQTIFAINKD) contributes to the FAD binding site.

This sequence belongs to the ETF alpha-subunit/FixB family. In terms of assembly, heterodimer of FixA and FixB.

It functions in the pathway amine and polyamine metabolism; carnitine metabolism. In terms of biological role, required for anaerobic carnitine reduction. May bring reductant to CaiA. This is Protein FixB from Salmonella agona (strain SL483).